We begin with the raw amino-acid sequence, 479 residues long: Proline--tRNA ligase (479 aa).

This sequence belongs to the class-II aminoacyl-tRNA synthetase family. ProS type 3 subfamily. Homodimer.

The protein resides in the cytoplasm. It carries out the reaction tRNA(Pro) + L-proline + ATP = L-prolyl-tRNA(Pro) + AMP + diphosphate. Catalyzes the attachment of proline to tRNA(Pro) in a two-step reaction: proline is first activated by ATP to form Pro-AMP and then transferred to the acceptor end of tRNA(Pro). The sequence is that of Proline--tRNA ligase from Mesomycoplasma hyopneumoniae (strain J / ATCC 25934 / NCTC 10110) (Mycoplasma hyopneumoniae).